A 591-amino-acid chain; its full sequence is MKKISLPKIGIRPVIDGRRMGVRESLEEQTMNMAKATAALITEKIRHACGAQVECVIADTCIAGMAESAACEEKFSSQNVGVTITVTPCWCYGSETIDMDPMRPKAIWGFNGTERPGAVYLAAALAAHSQKGIPAFSIYGHDVQDADDTSIPADVEEKLLRFARAGLAVASMKGKSYLSVGGVSMGIAGSIVDHNFFESWLGMKVQAVDMTELRRRIDQKIYDEAELEMALAWADKNFCYGEDQNASQYKRNEAQNRAVLKESLLMAMCIRDMMQGNKTLADKGLVEESLGYNAIAAGFQGQRHWTDQYPNGDTAEALLNSSFDWNGVREPFVVATENDSLNGVAMLFGHQLTGTAQIFADVRTYWSPEAVERITGQALSGLAEHGIIHLINSGSAALDGACKQRDSEGKPTMKPHWEISQQEADACLAATEWCPAIHEYFRGGGYSSRFLTEGGVPFTMTRVNIIKGLGPVLQIAEGWSVELPKAMHDQLDARTNSTWPTTWFAPRLTGKGPFTDVYSVMANWGANHGVLTIGHVGADFITLAAMLRIPVCMHNVEEAKIYRPSAWAAHGMDIEGQDYRACQNYGPLYKR.

Active-site proton acceptor residues include E337 and D361. 3 residues coordinate Mn(2+): E337, D361, and H528.

It belongs to the L-fucose isomerase family. Homohexamer. Requires Mn(2+) as cofactor.

It localises to the cytoplasm. The catalysed reaction is L-fucose = L-fuculose. Its pathway is carbohydrate degradation; L-fucose degradation; L-lactaldehyde and glycerone phosphate from L-fucose: step 1/3. In terms of biological role, converts the aldose L-fucose into the corresponding ketose L-fuculose. This chain is L-fucose isomerase, found in Salmonella choleraesuis (strain SC-B67).